Here is a 443-residue protein sequence, read N- to C-terminus: 5-methylthioadenosine/S-adenosylhomocysteine deaminase 1 (443 aa).

Residues His-69 and His-71 each coordinate Zn(2+). Positions 98 and 191 each coordinate substrate. His-218 lines the Zn(2+) pocket. Glu-221 and Asp-306 together coordinate substrate. Residue Asp-306 coordinates Zn(2+).

It belongs to the metallo-dependent hydrolases superfamily. MTA/SAH deaminase family. Requires Zn(2+) as cofactor.

The enzyme catalyses S-adenosyl-L-homocysteine + H2O + H(+) = S-inosyl-L-homocysteine + NH4(+). The catalysed reaction is S-methyl-5'-thioadenosine + H2O + H(+) = S-methyl-5'-thioinosine + NH4(+). Its function is as follows. Catalyzes the deamination of 5-methylthioadenosine and S-adenosyl-L-homocysteine into 5-methylthioinosine and S-inosyl-L-homocysteine, respectively. Is also able to deaminate adenosine. The polypeptide is 5-methylthioadenosine/S-adenosylhomocysteine deaminase 1 (Syntrophus aciditrophicus (strain SB)).